We begin with the raw amino-acid sequence, 470 residues long: Chitin deacetylase 1 (470 aa).

Residues methionine 1–alanine 19 form the signal peptide. N-linked (GlcNAc...) asparagine glycans are attached at residues asparagine 101 and asparagine 121. Cysteine 155 and cysteine 363 are oxidised to a cystine. A NodB homology domain is found at asparagine 159–lysine 358. Aspartate 166 acts as the Proton acceptor in catalysis. Position 166 (aspartate 166) interacts with acetate. Aspartate 167, histidine 216, and histidine 220 together coordinate Co(2+). Tyrosine 257 is an acetate binding site. The active-site Proton donor is the histidine 331. N-linked (GlcNAc...) asparagine glycosylation is found at asparagine 352, asparagine 378, and asparagine 440. Residues glutamate 406–glycine 447 form a disordered region. Over residues serine 408–glycine 447 the composition is skewed to low complexity. Residue serine 444 is the site of GPI-anchor amidated serine attachment. Positions glycine 445–alanine 470 are cleaved as a propeptide — removed in mature form.

This sequence belongs to the polysaccharide deacetylase family. Requires Co(2+) as cofactor.

It is found in the secreted. Its subcellular location is the cell wall. It localises to the cell membrane. It catalyses the reaction [(1-&gt;4)-N-acetyl-beta-D-glucosaminyl](n) + n H2O = chitosan + n acetate. Hydrolyzes the N-acetamido groups of N-acetyl-D-glucosamine residues in chitin to form chitosan and acetate. Chitosan is required to anchor melanin to the cell wall, for maintenance of cell wall integrity, and for proper cytokinesis. Plays a major role in synthesizing cell wall chitosan during host infection; chitosan offers an advantage during infection as it is less readily detected than chitin by host immunosurveillance mechanisms. The polypeptide is Chitin deacetylase 1 (Cryptococcus neoformans var. grubii serotype A (strain H99 / ATCC 208821 / CBS 10515 / FGSC 9487) (Filobasidiella neoformans var. grubii)).